We begin with the raw amino-acid sequence, 487 residues long: Cysteine--tRNA ligase (487 aa).

Cys29 contributes to the Zn(2+) binding site. The 'HIGH' region signature appears at Val31 to His41. Positions 209, 234, and 238 each coordinate Zn(2+). The 'KMSKS' region motif lies at Lys266–Ser270. Lys269 provides a ligand contact to ATP.

It belongs to the class-I aminoacyl-tRNA synthetase family. Monomer. Requires Zn(2+) as cofactor.

Its subcellular location is the cytoplasm. The catalysed reaction is tRNA(Cys) + L-cysteine + ATP = L-cysteinyl-tRNA(Cys) + AMP + diphosphate. This chain is Cysteine--tRNA ligase, found in Sulfurihydrogenibium sp. (strain YO3AOP1).